The following is a 426-amino-acid chain: Histidine--tRNA ligase (426 aa).

It belongs to the class-II aminoacyl-tRNA synthetase family. In terms of assembly, homodimer.

It localises to the cytoplasm. It carries out the reaction tRNA(His) + L-histidine + ATP = L-histidyl-tRNA(His) + AMP + diphosphate + H(+). The protein is Histidine--tRNA ligase of Streptococcus pyogenes serotype M49 (strain NZ131).